Here is a 220-residue protein sequence, read N- to C-terminus: Deoxyribose-phosphate aldolase (220 aa).

Catalysis depends on aspartate 89, which acts as the Proton donor/acceptor. The Schiff-base intermediate with acetaldehyde role is filled by lysine 151. The active-site Proton donor/acceptor is lysine 180.

The protein belongs to the DeoC/FbaB aldolase family. DeoC type 1 subfamily.

It localises to the cytoplasm. The enzyme catalyses 2-deoxy-D-ribose 5-phosphate = D-glyceraldehyde 3-phosphate + acetaldehyde. It functions in the pathway carbohydrate degradation; 2-deoxy-D-ribose 1-phosphate degradation; D-glyceraldehyde 3-phosphate and acetaldehyde from 2-deoxy-alpha-D-ribose 1-phosphate: step 2/2. Its function is as follows. Catalyzes a reversible aldol reaction between acetaldehyde and D-glyceraldehyde 3-phosphate to generate 2-deoxy-D-ribose 5-phosphate. The chain is Deoxyribose-phosphate aldolase from Mycoplasmopsis pulmonis (strain UAB CTIP) (Mycoplasma pulmonis).